The chain runs to 590 residues: MIVFDNGVRVFINTSTNKDIYVGISGFGFEKDIGGILGTAHLLEHILISFDVSRFIANASTARSYMSFWCTSIRGRSTPVDAIRTLISWFFDRDGLKHYFPVSKIKYHIKELENEYYFRNEVFHCMDALTFLANGDLYNGGRLSMLDRLDDMPLILQDRMCAITGPNIVIFVRELNDVVLSLLVSTFGTLPSCPLTIPCTLPTPIGGKIIMMPSPFYTVMVRVQPSLYNILSILCLYEIYHLVDYETVNNKLYVTISFIHEHEYESFLHGSARLNFTIYKKIRLHYGDDFLMNMYLSFPCIRHDIFDYLTIINTNVSTMIPSLEQNIYQSIKTGDYIVVYPNFSNTMSNVADRQLHKTVVIDTNIVYVTKPTTVIDLMKKHTHNDMYIKYSDTEFIDYVQLALGLRRKIHKNVNGIHIRHQFSADDIKTILESETFMKYSKSKPAAMYQYLILSFFVSGNTIEDILQHRESVIKLCRTYKNKILLGKQTRYDIQTLSSFVCGIFKGPSITSEYLTDIMWKLKRKGLIYSLEFVELQKNMFYLFMFTIYPEDVTSYLTSRKLFTSRCVVVSKKCNVEDFSSMKKDIIIKLR.

Position 41 (His41) interacts with Zn(2+). Glu44 is a catalytic residue. His45 lines the Zn(2+) pocket.

Belongs to the peptidase M44 family. Zn(2+) serves as cofactor.

Functionally, seems to be involved in viral proteins maturation by cleavage at Ala-Gly-|-Xaa motifs. The polypeptide is Probable metalloendopeptidase G1-type (GP045L) (Oryctolagus cuniculus (Rabbit)).